The sequence spans 237 residues: Ribosomal RNA small subunit methyltransferase G (237 aa).

Residues Gly78, Phe83, 129-130, and Arg148 each bind S-adenosyl-L-methionine; that span reads AE.

The protein belongs to the methyltransferase superfamily. RNA methyltransferase RsmG family.

It is found in the cytoplasm. Functionally, specifically methylates the N7 position of a guanine in 16S rRNA. The sequence is that of Ribosomal RNA small subunit methyltransferase G from Streptococcus pyogenes serotype M12 (strain MGAS2096).